Reading from the N-terminus, the 219-residue chain is Ras-related protein Rab-3D (219 aa).

At Ala2 the chain carries N-acetylalanine. 29–37 is a GDP binding site; it reads GNSSVGKTS. GTP contacts are provided by Ser31, Ser32, Val33, Gly34, Lys35, Thr36, Ser37, Pro49, and Ser53. Thr36 lines the Mg(2+) pocket. The Switch 1 signature appears at 49-58; that stretch reads PAFVSTVGID. 2 residues coordinate Mg(2+): Thr54 and Asp77. Residue Gly80 participates in GTP binding. A Switch 2 motif is present at residues 80–96; sequence GQERYRTITTAYYRGAM. A Phosphothreonine; by LRRK2 modification is found at Thr86. GTP-binding residues include Asn135, Lys136, Asp138, Ala166, and Lys167. Residues 135–138 and 165–167 each bind GDP; these read NKCD and SAK. At Ser190 the chain carries Phosphoserine. The interval 190–219 is disordered; the sequence is SLEPSSSPGSNGKGPALGDTPPPQPSSCSC. The span at 193–203 shows a compositional bias: low complexity; sequence PSSSPGSNGKG. Pro residues predominate over residues 209–219; sequence TPPPQPSSCSC. Residues Cys217 and Cys219 are each lipidated (S-geranylgeranyl cysteine). Position 219 is a cysteine methyl ester (Cys219).

It belongs to the small GTPase superfamily. Rab family. Interacts with RIMS1, RIMS2, RPH3A, RPH3AL and RAB3IP. The GTP-bound form interacts with REP15. Interacts with CHM and CHML; phosphorylation at Thr-86 disrupts these interactions. Interacts with MADD (via uDENN domain); the GTP-bound form is preferred for interaction. Requires Mg(2+) as cofactor. Post-translationally, phosphorylation of Thr-86 in the switch II region by LRRK2 prevents the association of RAB regulatory proteins, including CHM and CHML. In terms of tissue distribution, predominantly expressed in the adipocyte tissue, but is also expressed in several other organs including skin, spleen, heart and lung.

The protein resides in the cell membrane. It carries out the reaction GTP + H2O = GDP + phosphate + H(+). Its activity is regulated as follows. Regulated by guanine nucleotide exchange factors (GEFs) which promote the exchange of bound GDP for free GTP. Regulated by GTPase activating proteins (GAPs) which increase the GTP hydrolysis activity. Inhibited by GDP dissociation inhibitors (GDIs) which prevent Rab-GDP dissociation. Functionally, the small GTPases Rab are key regulators of intracellular membrane trafficking, from the formation of transport vesicles to their fusion with membranes. Rabs cycle between an inactive GDP-bound form and an active GTP-bound form that is able to recruit to membranes different sets of downstream effectors directly responsible for vesicle formation, movement, tethering and fusion. RAB3D may be involved in the insulin-induced exocytosis of GLUT4-containing vesicles in adipocytes. In Mus musculus (Mouse), this protein is Ras-related protein Rab-3D.